The chain runs to 102 residues: Large ribosomal subunit protein bL21 (102 aa).

It belongs to the bacterial ribosomal protein bL21 family. In terms of assembly, part of the 50S ribosomal subunit. Contacts protein L20.

This protein binds to 23S rRNA in the presence of protein L20. The protein is Large ribosomal subunit protein bL21 of Ligilactobacillus salivarius (strain UCC118) (Lactobacillus salivarius).